The following is a 202-amino-acid chain: Guanylate kinase (202 aa).

The Guanylate kinase-like domain occupies 3-181 (GNLFIITAPS…ALEDLRAIIR (179 aa)). Position 10–17 (10–17 (APSGAGKT)) interacts with ATP.

It belongs to the guanylate kinase family.

The protein resides in the cytoplasm. It carries out the reaction GMP + ATP = GDP + ADP. Its function is as follows. Essential for recycling GMP and indirectly, cGMP. This Methylobacillus flagellatus (strain ATCC 51484 / DSM 6875 / VKM B-1610 / KT) protein is Guanylate kinase.